A 297-amino-acid chain; its full sequence is Formamidopyrimidine-DNA glycosylase (297 aa).

Pro-2 serves as the catalytic Schiff-base intermediate with DNA. The Proton donor role is filled by Glu-3. The active-site Proton donor; for beta-elimination activity is Lys-61. DNA-binding residues include Arg-120 and Arg-176. An FPG-type zinc finger spans residues 262–296 (HVYGRQGQPCDRCGTAIVRESFMNRGSHFCPRCQR). Residue Arg-286 is the Proton donor; for delta-elimination activity of the active site.

This sequence belongs to the FPG family. Monomer. Zn(2+) serves as cofactor.

The catalysed reaction is Hydrolysis of DNA containing ring-opened 7-methylguanine residues, releasing 2,6-diamino-4-hydroxy-5-(N-methyl)formamidopyrimidine.. It catalyses the reaction 2'-deoxyribonucleotide-(2'-deoxyribose 5'-phosphate)-2'-deoxyribonucleotide-DNA = a 3'-end 2'-deoxyribonucleotide-(2,3-dehydro-2,3-deoxyribose 5'-phosphate)-DNA + a 5'-end 5'-phospho-2'-deoxyribonucleoside-DNA + H(+). Functionally, involved in base excision repair of DNA damaged by oxidation or by mutagenic agents. Acts as a DNA glycosylase that recognizes and removes damaged bases. Has a preference for oxidized purines, such as 7,8-dihydro-8-oxoguanine (8-oxoG). Has AP (apurinic/apyrimidinic) lyase activity and introduces nicks in the DNA strand. Cleaves the DNA backbone by beta-delta elimination to generate a single-strand break at the site of the removed base with both 3'- and 5'-phosphates. In Leifsonia xyli subsp. xyli (strain CTCB07), this protein is Formamidopyrimidine-DNA glycosylase.